A 1372-amino-acid chain; its full sequence is DNA-directed RNA polymerase subunit beta (1372 aa).

Belongs to the RNA polymerase beta chain family. The RNAP catalytic core consists of 2 alpha, 1 beta, 1 beta' and 1 omega subunit. When a sigma factor is associated with the core the holoenzyme is formed, which can initiate transcription.

The enzyme catalyses RNA(n) + a ribonucleoside 5'-triphosphate = RNA(n+1) + diphosphate. Functionally, DNA-dependent RNA polymerase catalyzes the transcription of DNA into RNA using the four ribonucleoside triphosphates as substrates. The chain is DNA-directed RNA polymerase subunit beta from Nitratidesulfovibrio vulgaris (strain ATCC 29579 / DSM 644 / CCUG 34227 / NCIMB 8303 / VKM B-1760 / Hildenborough) (Desulfovibrio vulgaris).